The sequence spans 811 residues: Methionine--tRNA ligase (811 aa).

The 'HIGH' region signature appears at 11 to 21 (PYVNNVPHLGN). Residues Cys142, Cys145, Cys155, and Cys158 each coordinate Zn(2+). A 'KMSKS' region motif is present at residues 344 to 348 (KFSKS). Residue Lys347 participates in ATP binding. The segment at 606-640 (GVSVPRTAQMPTGMNKKETDAQQKKEEREMPPPSD) is disordered. The span at 620–635 (NKKETDAQQKKEEREM) shows a compositional bias: basic and acidic residues. In terms of domain architecture, tRNA-binding spans 648-753 (FSERVVLKVA…PWALPGERAT (106 aa)).

The protein belongs to the class-I aminoacyl-tRNA synthetase family. MetG type 1 subfamily. As to quaternary structure, homodimer. Zn(2+) serves as cofactor.

It is found in the cytoplasm. The enzyme catalyses tRNA(Met) + L-methionine + ATP = L-methionyl-tRNA(Met) + AMP + diphosphate. Functionally, is required not only for elongation of protein synthesis but also for the initiation of all mRNA translation through initiator tRNA(fMet) aminoacylation. In Treponema pallidum (strain Nichols), this protein is Methionine--tRNA ligase.